Consider the following 367-residue polypeptide: Outer membrane protein assembly factor BamC (367 aa).

Positions 1-16 (MRLLPLFLMVTLAASG) are cleaved as a signal peptide. Cysteine 17 carries N-palmitoyl cysteine lipidation. Cysteine 17 is lipidated: S-diacylglycerol cysteine.

It belongs to the BamC family. In terms of assembly, part of the Bam complex.

The protein localises to the cell outer membrane. Part of the outer membrane protein assembly complex, which is involved in assembly and insertion of beta-barrel proteins into the outer membrane. The sequence is that of Outer membrane protein assembly factor BamC from Thiobacillus denitrificans (strain ATCC 25259 / T1).